Here is a 202-residue protein sequence, read N- to C-terminus: Cold-regulated 413 plasma membrane protein 4 (202 aa).

The Extracellular portion of the chain corresponds to 1–42 (MGRGEFLAMKTEENAANLINSDMNEFVAAAKKLVKDVGMLGG). The chain crosses the membrane as a helical span at residues 43–63 (VGFGTSVLQWAASIFAIYLLI). Topologically, residues 64 to 72 (LDRTNWKTK) are cytoplasmic. The chain crosses the membrane as a helical span at residues 73–93 (MLTTLLVPYIFFTLPSVIFQF). Residues 94-97 (FSGD) are Extracellular-facing. The helical transmembrane segment at 98–118 (FGKWIALIAIIVRLFFPKEFP) threads the bilayer. A topological domain (cytoplasmic) is located at residue E119. Residues 120–140 (WLEIPVALILIVVVSPSLIAW) traverse the membrane as a helical segment. The Extracellular portion of the chain corresponds to 141 to 145 (TLRES). A helical transmembrane segment spans residues 146-166 (WVGAVICLVIACYLFHEHIKA). The Cytoplasmic portion of the chain corresponds to 167-181 (SGGFKNSFTQKNGIS). Residues 182 to 202 (NTIGIVALLVYPVWTIFFHIF) traverse the membrane as a helical segment.

It belongs to the Cold-regulated 413 protein family.

The protein resides in the cell membrane. The sequence is that of Cold-regulated 413 plasma membrane protein 4 from Arabidopsis thaliana (Mouse-ear cress).